Consider the following 1464-residue polypeptide: Secretory phospholipase A2 receptor (1464 aa).

Residues 1 to 22 (MLLSPSLLLPLLLLLGAPRGCA) form the signal peptide. At 23–1398 (EGVAAALTPE…ELPEKGPSHS (1376 aa)) the chain is on the extracellular side. A Ricin B-type lectin domain is found at 40 to 163 (KGIFVIQSES…GSGGGDICEY (124 aa)). Cystine bridges form between Cys53-Cys66, Cys91-Cys108, Cys180-Cys206, Cys194-Cys221, Cys262-Cys356, Cys332-Cys348, Cys408-Cys503, Cys480-Cys495, Cys619-Cys636, Cys701-Cys798, Cys776-Cys790, Cys842-Cys939, Cys916-Cys931, Cys1069-Cys1089, Cys1211-Cys1225, Cys1282-Cys1378, and Cys1356-Cys1370. Asn95 carries an N-linked (GlcNAc...) asparagine glycan. In terms of domain architecture, Fibronectin type-II spans 175–223 (AHGMPCMFPFQYNHQWHHECTREGREDDLLWCATTSRYERDEKWGFCPD). C-type lectin domains follow at residues 240–357 (NSHI…YVCK), 387–504 (YNRN…YVCK), 524–645 (HGGF…MSLC), 675–799 (GLAS…WICK), 821–940 (YQDA…SICK), 967–1098 (FNYK…GFVC), 1123–1234 (YGNR…GAIC), and 1259–1379 (FKSN…FICK). Asn456 carries an N-linked (GlcNAc...) asparagine glycan. The chain crosses the membrane as a helical span at residues 1399 to 1419 (IIPLAVVLTLIVIVAICTLSF). At 1420 to 1464 (CIYKHNGGFFRRLAGFRNPYYPATNFSTVHLEENILISDLEKSDQ) the chain is on the cytoplasmic side. The short motif at 1437–1443 (NPYYPAT) is the Endocytosis signal element.

As to quaternary structure, interacts with sPLA2-IB/PLA2G1B; this interaction mediates intracellular signaling as well as clearance of extracellular sPLA2-IB/PLA2G1B via endocytotic pathway. Interacts with sPLA2-X/PLA2G10; this interaction mediates sPLA2-X/PLA2G10 clearance and inactivation. Post-translationally, the secretory phospholipase A2 receptor form may be produced by the action of metalloproteinases. It contains all extracellular domains and only lacks transmembrane and cytosolic regions. It is however unclear whether this form is produced by proteolytic cleavage as suggested by some experiments, or by alternative splicing.

The protein resides in the cell membrane. It localises to the secreted. In terms of biological role, receptor for secretory phospholipase A2 (sPLA2). Also able to bind to snake PA2-like toxins. Although its precise function remains unclear, binding of sPLA2 to its receptor participates in both positive and negative regulation of sPLA2 functions as well as clearance of sPLA2. Binding of sPLA2-IB/PLA2G1B induces various effects depending on the cell type, such as activation of the mitogen-activated protein kinase (MAPK) cascade to induce cell proliferation, the production of lipid mediators, selective release of arachidonic acid in bone marrow-derived mast cells. In neutrophils, binding of sPLA2-IB/PLA2G1B can activate p38 MAPK to stimulate elastase release and cell adhesion. May be involved in responses in pro-inflammatory cytokine productions during endotoxic shock. Also has endocytic properties and rapidly internalizes sPLA2 ligands, which is particularly important for the clearance of extracellular sPLA2s to protect their potent enzymatic activities. The soluble secretory phospholipase A2 receptor form is circulating and acts as a negative regulator of sPLA2 functions by blocking the biological functions of sPLA2-IB/PLA2G1B and sPLA2-X/PLA2G10. This chain is Secretory phospholipase A2 receptor (PLA2R1), found in Pongo abelii (Sumatran orangutan).